The primary structure comprises 221 residues: Phosphoribosylformylglycinamidine synthase subunit PurQ (221 aa).

A Glutamine amidotransferase type-1 domain is found at 3–221 (AAVLVFPGSN…MFASLMQVMA (219 aa)). The active-site Nucleophile is Cys-87. Catalysis depends on residues His-195 and Glu-197.

In terms of assembly, part of the FGAM synthase complex composed of 1 PurL, 1 PurQ and 2 PurS subunits.

It is found in the cytoplasm. It catalyses the reaction N(2)-formyl-N(1)-(5-phospho-beta-D-ribosyl)glycinamide + L-glutamine + ATP + H2O = 2-formamido-N(1)-(5-O-phospho-beta-D-ribosyl)acetamidine + L-glutamate + ADP + phosphate + H(+). The enzyme catalyses L-glutamine + H2O = L-glutamate + NH4(+). The protein operates within purine metabolism; IMP biosynthesis via de novo pathway; 5-amino-1-(5-phospho-D-ribosyl)imidazole from N(2)-formyl-N(1)-(5-phospho-D-ribosyl)glycinamide: step 1/2. In terms of biological role, part of the phosphoribosylformylglycinamidine synthase complex involved in the purines biosynthetic pathway. Catalyzes the ATP-dependent conversion of formylglycinamide ribonucleotide (FGAR) and glutamine to yield formylglycinamidine ribonucleotide (FGAM) and glutamate. The FGAM synthase complex is composed of three subunits. PurQ produces an ammonia molecule by converting glutamine to glutamate. PurL transfers the ammonia molecule to FGAR to form FGAM in an ATP-dependent manner. PurS interacts with PurQ and PurL and is thought to assist in the transfer of the ammonia molecule from PurQ to PurL. The polypeptide is Phosphoribosylformylglycinamidine synthase subunit PurQ (Zymomonas mobilis subsp. mobilis (strain ATCC 31821 / ZM4 / CP4)).